The sequence spans 381 residues: Flap endonuclease 1 (381 aa).

Residues 1-105 (MGIKGLNSII…HELDKRTSRR (105 aa)) form an N-domain region. D34 provides a ligand contact to Mg(2+). Positions 47 and 71 each coordinate DNA. The Mg(2+) site is built by D87, E156, E158, D177, and D179. The I-domain stretch occupies residues 120 to 251 (EKMKHERRLV…VTALKLMKEH (132 aa)). DNA is bound at residue E156. DNA is bound by residues G229 and D231. D231 provides a ligand contact to Mg(2+). An interaction with PCNA region spans residues 338 to 346 (VQGRLDGFF).

The protein belongs to the XPG/RAD2 endonuclease family. FEN1 subfamily. Interacts with PCNA. Three molecules of FEN1 bind to one PCNA trimer with each molecule binding to one PCNA monomer. PCNA stimulates the nuclease activity without altering cleavage specificity. It depends on Mg(2+) as a cofactor. Phosphorylated. Phosphorylation upon DNA damage induces relocalization to the nuclear plasma.

The protein localises to the nucleus. It localises to the nucleolus. Its subcellular location is the nucleoplasm. It is found in the mitochondrion. In terms of biological role, structure-specific nuclease with 5'-flap endonuclease and 5'-3' exonuclease activities involved in DNA replication and repair. During DNA replication, cleaves the 5'-overhanging flap structure that is generated by displacement synthesis when DNA polymerase encounters the 5'-end of a downstream Okazaki fragment. It enters the flap from the 5'-end and then tracks to cleave the flap base, leaving a nick for ligation. Also involved in the long patch base excision repair (LP-BER) pathway, by cleaving within the apurinic/apyrimidinic (AP) site-terminated flap. Acts as a genome stabilization factor that prevents flaps from equilibrating into structures that lead to duplications and deletions. Also possesses 5'-3' exonuclease activity on nicked or gapped double-stranded DNA, and exhibits RNase H activity. Also involved in replication and repair of rDNA and in repairing mitochondrial DNA. The chain is Flap endonuclease 1 from Candida glabrata (strain ATCC 2001 / BCRC 20586 / JCM 3761 / NBRC 0622 / NRRL Y-65 / CBS 138) (Yeast).